The following is a 179-amino-acid chain: MARLYDFYKDSVVPELMKQFGYKSIMQVPRIEKITVNMGVGEAVADKKVMEFAVGDLEKIAGQKPVVTTARKSIAGFKIRDDYPVGCKVTLRRERMYEFLDRLVTIALPRVRDFRGVSAKSFDGRGNYNMGVKEQIIFPEIEYDKIDALRGMNITITTSAKTDEEARALLAAFKFPFKG.

This sequence belongs to the universal ribosomal protein uL5 family. Part of the 50S ribosomal subunit; part of the 5S rRNA/L5/L18/L25 subcomplex. Contacts the 5S rRNA and the P site tRNA. Forms a bridge to the 30S subunit in the 70S ribosome.

In terms of biological role, this is one of the proteins that bind and probably mediate the attachment of the 5S RNA into the large ribosomal subunit, where it forms part of the central protuberance. In the 70S ribosome it contacts protein S13 of the 30S subunit (bridge B1b), connecting the 2 subunits; this bridge is implicated in subunit movement. Contacts the P site tRNA; the 5S rRNA and some of its associated proteins might help stabilize positioning of ribosome-bound tRNAs. The protein is Large ribosomal subunit protein uL5 of Chromobacterium violaceum (strain ATCC 12472 / DSM 30191 / JCM 1249 / CCUG 213 / NBRC 12614 / NCIMB 9131 / NCTC 9757 / MK).